Consider the following 75-residue polypeptide: Microcin H47 (75 aa).

A propeptide spanning residues M1–A15 is cleaved from the precursor. The chain crosses the membrane as a helical span at residues A30–V50.

The protein localises to the secreted. It localises to the host cell membrane. Bactericidal antibiotic. Active on bacteria phylogenetically related to the producing strain. The polypeptide is Microcin H47 (mchB) (Escherichia coli O6:H1 (strain CFT073 / ATCC 700928 / UPEC)).